Consider the following 669-residue polypeptide: p135Gag-Myb-Ets-transforming protein (669 aa).

The span at 1 to 10 (NSTMRRKVEQ) shows a compositional bias: basic and acidic residues. Disordered regions lie at residues 1 to 27 (NSTM…SATT) and 132 to 153 (TQNH…NTMT). Residues 90–142 (PAAAAIQRHYNDEDPEKEKRIKELELLLMSTENELKGQQALPTQNHTANYPGW) form a transcriptional activation domain region. Residues 276 to 361 (ATFSGFAKEQ…EHLEILQKEE (86 aa)) enclose the PNT domain. Residues 556–640 (GSGPIQLWQF…AGKRYVYRFV (85 aa)) constitute a DNA-binding region (ETS).

The protein resides in the host nucleus. Its function is as follows. DNA-binding protein that specifically recognizes the sequence 5'-YAAC[GT]G-3'. The Myb-Ets protein induces predominantly erythroblastosis in chicken and transforms avian erythroblasts and immature myelomonocytic cells in culture. It appears that the Ets domain is responsible for the effects on erythroid cells and that the Myb domain encodes the myeloid-transforming capacity. In Avian leukemia virus E26, this protein is p135Gag-Myb-Ets-transforming protein (GAG).